We begin with the raw amino-acid sequence, 92 residues long: Tachykinin-2 (92 aa).

Positions 1–22 (MIRVGLILCCIFIVGVFEASSA) are cleaved as a signal peptide. The propeptide occupies 23–37 (DDILTAHNLIKRSEV). Residue methionine 49 is modified to Methionine amide. A propeptide spanning residues 52 to 92 (SEELTRRLIQHPGSMSETSKRGPPKKGDFNPNELKPESNIC) is cleaved from the precursor. The disordered stretch occupies residues 61–92 (QHPGSMSETSKRGPPKKGDFNPNELKPESNIC).

This sequence belongs to the tachykinin family. Expressed in the posterior salivary gland and more specifically in the mucus-secreting gland cells.

The protein localises to the secreted. Functionally, tachykinins are active peptides which excite neurons, evoke behavioral responses, are potent vasodilators and secretagogues, and contract (directly or indirectly) many smooth muscles. The chain is Tachykinin-2 from Octopus vulgaris (Common octopus).